The sequence spans 258 residues: MANKRTPIFIAGILIPILLNGCSSGKNKAYLDPKVFPPQVEGGPTVPSPDEPGLPLPGPGPALPTNGAIPIPEPGTAPAVSLMNMDGSVLTMWSRGAGSSLWAYYIGDSNSFGELRNWQIMPGTRPNTIQFRNVDVGTCMTSFPGFKGGVQLSTAPCKFGPERFDFQPMATRNGNYQLKSLSTGLCIRANFLGRTPSSPYATTLTMERCPSSGEKNFEFMWSISEPLRPALATIAKPEIRPFPPQPIEPDEHSTGGEQ.

An N-terminal signal peptide occupies residues 1 to 21; that stretch reads MANKRTPIFIAGILIPILLNG. Cysteine 22 carries N-palmitoyl cysteine lipidation. The S-diacylglycerol cysteine moiety is linked to residue cysteine 22. Residues 40–71 are disordered; sequence VEGGPTVPSPDEPGLPLPGPGPALPTNGAIPI. Residues 46-62 show a composition bias toward pro residues; the sequence is VPSPDEPGLPLPGPGPA. Residues 93 to 104 are mediates binding to target cells; sequence WSRGAGSSLWAY. Positions 125–223 constitute a Ricin B-type lectin domain; the sequence is RPNTIQFRNV…EKNFEFMWSI (99 aa). A disordered region spans residues 236–258; sequence KPEIRPFPPQPIEPDEHSTGGEQ. Residues 249–258 are compositionally biased toward basic and acidic residues; it reads PDEHSTGGEQ.

As to quaternary structure, heterotrimer of 3 subunits, CdtA, CdtB and CdtC.

Its subcellular location is the cell outer membrane. In terms of biological role, CDTs are cytotoxins which induce host cell distension, growth arrest in G2/M phase, nucleus swelling, and chromatin fragmentation in HeLa cells. CdtA, along with CdtC, probably forms a heterodimeric subunit required for the delivery of CdtB. In Escherichia coli, this protein is Cytolethal distending toxin subunit A (cdtA).